The following is a 712-amino-acid chain: DNA ligase (712 aa).

The segment covering 1–22 (MSTQYDSDSSPAASNSGSADPA) has biased composition (low complexity). A disordered region spans residues 1–23 (MSTQYDSDSSPAASNSGSADPAL). 53 to 57 (DAEFD) is a binding site for NAD(+). A disordered region spans residues 69-93 (SHPEAVTGPSPTTEVAPSPPESSPF). NAD(+)-binding positions include 104–105 (SL) and glutamate 129. The active-site N6-AMP-lysine intermediate is the lysine 131. Arginine 152, glutamate 192, lysine 308, and lysine 332 together coordinate NAD(+). The Zn(2+) site is built by cysteine 426, cysteine 429, cysteine 445, and cysteine 451. The BRCT domain occupies 624–712 (IQADLLAGLS…GPGKGDAEED (89 aa)).

It belongs to the NAD-dependent DNA ligase family. LigA subfamily. The cofactor is Mg(2+). It depends on Mn(2+) as a cofactor.

It carries out the reaction NAD(+) + (deoxyribonucleotide)n-3'-hydroxyl + 5'-phospho-(deoxyribonucleotide)m = (deoxyribonucleotide)n+m + AMP + beta-nicotinamide D-nucleotide.. In terms of biological role, DNA ligase that catalyzes the formation of phosphodiester linkages between 5'-phosphoryl and 3'-hydroxyl groups in double-stranded DNA using NAD as a coenzyme and as the energy source for the reaction. It is essential for DNA replication and repair of damaged DNA. This chain is DNA ligase, found in Corynebacterium urealyticum (strain ATCC 43042 / DSM 7109).